The primary structure comprises 120 residues: uncharacterized protein (120 aa).

Residues 63 to 83 (IDMSCVICFNFSCHLFVVIFI) form a helical membrane-spanning segment.

The protein resides in the membrane. This is an uncharacterized protein from Saccharomyces cerevisiae (strain ATCC 204508 / S288c) (Baker's yeast).